A 417-amino-acid polypeptide reads, in one-letter code: Putative competence-damage inducible protein (417 aa).

Belongs to the CinA family.

In Shouchella clausii (strain KSM-K16) (Alkalihalobacillus clausii), this protein is Putative competence-damage inducible protein.